The primary structure comprises 912 residues: Accessory gland protein Acp36DE (912 aa).

A signal peptide spans 1 to 23; sequence MWTLTCQQFIALILLGTLVPSES. 4 stretches are compositionally biased toward low complexity: residues 193 to 220, 230 to 255, 271 to 324, and 521 to 544; these read QSQSQTQSQSASQSESNASSQFQAQEQS, SESQSQSESQSQSESQKQSQSQSQRQ, KSNE…GLQQ, and QSQLQESKSNSLSQSQSQSQEQLQ. 5 disordered regions span residues 193–255, 271–349, 518–544, 638–671, and 732–912; these read QSQS…SQRQ, KSNE…QKQL, TQTQSQLQESKSNSLSQSQSQSQEQLQ, PSEGKPAPGNQGPSIEPKLVPQPGSLDKLPSGGG, and GQQQ…NLSG. 2 stretches are compositionally biased toward low complexity: residues 732–757 and 765–785; these read GQQQKEQQAQESINKQQSSSAGSSSQ and QSTGAQGSQQGLQAGSTGLQT. Positions 803-818 are enriched in basic and acidic residues; it reads RLKEQEQLRIQTENDQ. Over residues 821-845 the composition is skewed to low complexity; the sequence is SSSSSHSNSQNSQSSSSQSSQASQS. The segment covering 851 to 861 has biased composition (polar residues); the sequence is EAGNRNTLLLD. Residues 862–897 show a composition bias toward low complexity; that stretch reads QSSSKTQSESKSESSSQSSSHSSSQSTSNSSSNVQS. Residues 898–912 are compositionally biased toward polar residues; it reads KLQGESQALLNNLSG.

Proteolytically cleaved by the seminal metalloprotease Semp1. Cleavage appears to take place in the mated female. In terms of tissue distribution, detected in the male accessory glands (at protein level). Produced in the accessory glands and secreted into seminal fluid.

The protein localises to the secreted. Responsible for physiological and behavioral changes in mated female flies. Associates with sperm and localizes to specific regions of the female reproductive tract, including the sperm storage organs. It accelerates sperm accumulation into storage but does not mediate the entry of the first sperm into storage. Once sperm storage has initiated it seems to act as a guidance factor helping subsequent sperm move into storage, a corral concentrating sperm around the SSO entrances and/or a trigger for responses within the female that accelerate storage of sperm. The polypeptide is Accessory gland protein Acp36DE (Acp36DE) (Drosophila melanogaster (Fruit fly)).